The primary structure comprises 436 residues: Diaminobutyrate--2-oxoglutarate transaminase (436 aa).

N6-(pyridoxal phosphate)lysine is present on Lys-269.

Belongs to the class-III pyridoxal-phosphate-dependent aminotransferase family. The cofactor is pyridoxal 5'-phosphate.

The catalysed reaction is L-2,4-diaminobutanoate + 2-oxoglutarate = L-aspartate 4-semialdehyde + L-glutamate. It functions in the pathway amine and polyamine biosynthesis; ectoine biosynthesis; L-ectoine from L-aspartate 4-semialdehyde: step 1/3. Catalyzes reversively the conversion of L-aspartate beta-semialdehyde (ASA) to L-2,4-diaminobutyrate (DABA) by transamination with L-glutamate. The sequence is that of Diaminobutyrate--2-oxoglutarate transaminase (ectB) from Nocardia farcinica (strain IFM 10152).